Reading from the N-terminus, the 513-residue chain is Protein CYCLOPS (513 aa).

Disordered stretches follow at residues 329–380 (QGRT…STQN) and 395–435 (DDRK…AEAK). Over residues 333-347 (ASGEPSQSESSAAAP) the composition is skewed to low complexity. Over residues 359–380 (PSNSNQTLGDSSWKQVGESTQN) the composition is skewed to polar residues. Short sequence motifs (nuclear localization signal) lie at residues 397–400 (RKRK) and 421–424 (KKRR). Residues 447–513 (MQAILKRCEN…ERILSETGKI (67 aa)) are a coiled coil.

This sequence belongs to the CYCLOPS family. As to quaternary structure, forms homodimers. Interacts with CCAMK. As to expression, highly expressed in roots. Expressed in root hairs and nodules. Not detected in leaves or flowers.

The protein resides in the nucleus. Functionally, involved symbiotic signaling. Required for root infection by symbiotic rhizobia, infection thread (IT) formation, and nodule development. Required for proper induction of early nodulin gene expression. Probably not involved in nodule organogenesis. Involved in arbuscular mycorrhizal (AM) symbiosis. Required for fungal infection of the outer cortical cell layers, and for arbuscule development during the AM symbiosis. Acts downstream of CCAMK. Required for symbiosome formation (i.e. the release of the bacteria from the ITs) and subsequent symbiosome development. Required for the expression of the nodule-specific RPG gene, which controls proper IT growth and is essential for symbiosome formation. Acts upstream of ERN1, a transcriptional regulator required for nodulation. This chain is Protein CYCLOPS, found in Medicago truncatula (Barrel medic).